A 203-amino-acid polypeptide reads, in one-letter code: Ribosome assembly protein 3 (203 aa).

The interval 1–90 is disordered; sequence MSEGHIAAIS…DKKASRKEGS (90 aa). A compositionally biased stretch (basic residues) spans 12 to 23; it reads TNKRKNRRKKRR. Low complexity predominate over residues 27–43; the sequence is VSDSSSDSSSDSENSSV. Basic and acidic residues predominate over residues 46 to 58; it reads NDTKLETVEKAAS. A compositionally biased stretch (acidic residues) spans 59–78; it reads DVEDVTLSDIDMDKEEDEAA. Over residues 79-89 the composition is skewed to basic and acidic residues; the sequence is LDDKKASRKEG.

The protein belongs to the RSA3 family. As to quaternary structure, associates with nucleolar pre-ribosomal particles.

It localises to the nucleus. The protein resides in the nucleolus. Required for efficient biogenesis of the 60S ribosomal subunit. The polypeptide is Ribosome assembly protein 3 (RSA3) (Kluyveromyces lactis (strain ATCC 8585 / CBS 2359 / DSM 70799 / NBRC 1267 / NRRL Y-1140 / WM37) (Yeast)).